The chain runs to 130 residues: Protein ApaG (130 aa).

The 125-residue stretch at 3–127 (KAETRGISVI…FSLDVPHMRR (125 aa)) folds into the ApaG domain.

This chain is Protein ApaG, found in Methylobacterium nodulans (strain LMG 21967 / CNCM I-2342 / ORS 2060).